Reading from the N-terminus, the 175-residue chain is RNA pyrophosphohydrolase (175 aa).

The Nudix hydrolase domain maps to G6–K150. The Nudix box signature appears at G38–G59.

Belongs to the Nudix hydrolase family. RppH subfamily. The cofactor is a divalent metal cation.

In terms of biological role, accelerates the degradation of transcripts by removing pyrophosphate from the 5'-end of triphosphorylated RNA, leading to a more labile monophosphorylated state that can stimulate subsequent ribonuclease cleavage. This chain is RNA pyrophosphohydrolase, found in Aeromonas hydrophila subsp. hydrophila (strain ATCC 7966 / DSM 30187 / BCRC 13018 / CCUG 14551 / JCM 1027 / KCTC 2358 / NCIMB 9240 / NCTC 8049).